The chain runs to 993 residues: Vacuolar membrane protease (993 aa).

The Cytoplasmic segment spans residues 1–24 (MSPAMANPRVRKFNPIAFTPLPVT). Residues 25-45 (LITTIVYLAVLILVLVTYLVV) traverse the membrane as a helical segment. The Vacuolar segment spans residues 46-391 (PPAPTLEMSP…SAFAVFRLHT (346 aa)). Residues N59, N116, and N119 are each glycosylated (N-linked (GlcNAc...) asparagine). Residues H175 and D187 each contribute to the Zn(2+) site. E221 functions as the Proton acceptor in the catalytic mechanism. Residue E222 coordinates Zn(2+). N238 carries an N-linked (GlcNAc...) asparagine glycan. Zn(2+) is bound by residues E247 and H320. A helical transmembrane segment spans residues 392 to 412 (LFALSVTLLVSAPLVLFITSI). Residues 413–447 (ALSKTDRMYLFSMSKSLGGTSETVSLRGLRGLFRT) lie on the Cytoplasmic side of the membrane. A helical membrane pass occupies residues 448-468 (PIILTVTTVITIGLAYLLEKI). Residues 469–475 (NPYIVHS) lie on the Vacuolar side of the membrane. Residues 476-496 (SQFAVWSMMLSVWIFVAWFLA) traverse the membrane as a helical segment. Residues 497–509 (RVADFFRPSALHR) are Cytoplasmic-facing. A helical membrane pass occupies residues 510–530 (AYSYTWIFIATWIMLVISTVY). Topologically, residues 531-534 (ANQK) are vacuolar. A helical membrane pass occupies residues 535–555 (GIAAGYFIFFYFAAVFLATWV). Over 556-672 (SYLELFSLPR…WSWTLPRWTW (117 aa)) the chain is Cytoplasmic. The interval 579–621 (RRSSSLSSRLLTPSADELPSDIGPNGAENLGDPDETDPTESTS) is disordered. The helical transmembrane segment at 673–693 (ILQLLLLAPIVIILVGQVGLL) threads the bilayer. Residues 694 to 709 (LTTAMSQIGSDGVSTF) are Vacuolar-facing. Residues 710 to 730 (IVYLACALLSTLLFAPLFPFI) form a helical membrane-spanning segment. The Cytoplasmic segment spans residues 731–737 (HRFTYHV). The chain crosses the membrane as a helical span at residues 738 to 758 (PTFLLLIFIGTLIYNLVAFPF). The Vacuolar portion of the chain corresponds to 759–993 (SPANRLKIFF…VEASHDFIIQ (235 aa)). N-linked (GlcNAc...) asparagine glycans are attached at residues N806, N847, and N955.

Belongs to the peptidase M28 family. It depends on Zn(2+) as a cofactor.

Its subcellular location is the vacuole membrane. In terms of biological role, may be involved in vacuolar sorting and osmoregulation. The polypeptide is Vacuolar membrane protease (Paracoccidioides lutzii (strain ATCC MYA-826 / Pb01) (Paracoccidioides brasiliensis)).